The primary structure comprises 95 residues: Cell division protein FtsB (95 aa).

Residues 1–3 (MRL) lie on the Cytoplasmic side of the membrane. The chain crosses the membrane as a helical span at residues 4–21 (FILILSAILLLFQYDLWF). Residues 22 to 95 (GKNGYLDYKE…RIAKENKDNR (74 aa)) lie on the Periplasmic side of the membrane. A coiled-coil region spans residues 28–62 (DYKETAEEIAMHKAENTKLSQRNQVVAAEIRDLKD).

The protein belongs to the FtsB family. In terms of assembly, part of a complex composed of FtsB, FtsL and FtsQ.

The protein localises to the cell inner membrane. Its function is as follows. Essential cell division protein. May link together the upstream cell division proteins, which are predominantly cytoplasmic, with the downstream cell division proteins, which are predominantly periplasmic. The polypeptide is Cell division protein FtsB (Mannheimia succiniciproducens (strain KCTC 0769BP / MBEL55E)).